A 486-amino-acid chain; its full sequence is Galactose-1-phosphate uridylyltransferase (486 aa).

It belongs to the galactose-1-phosphate uridylyltransferase type 2 family.

It localises to the cytoplasm. It catalyses the reaction alpha-D-galactose 1-phosphate + UDP-alpha-D-glucose = alpha-D-glucose 1-phosphate + UDP-alpha-D-galactose. The protein operates within carbohydrate metabolism; galactose metabolism. The chain is Galactose-1-phosphate uridylyltransferase from Pediococcus pentosaceus (strain ATCC 25745 / CCUG 21536 / LMG 10740 / 183-1w).